The sequence spans 156 residues: Transcriptional repressor NrdR (156 aa).

The segment at 3-34 (CPFCSETDTKVIDSRLVADGAQVRRRRECLTC) is a zinc-finger region. In terms of domain architecture, ATP-cone spans 49–139 (PRVIKQDGTR…VYRSFQDLSE (91 aa)).

It belongs to the NrdR family. Requires Zn(2+) as cofactor.

Functionally, negatively regulates transcription of bacterial ribonucleotide reductase nrd genes and operons by binding to NrdR-boxes. The protein is Transcriptional repressor NrdR of Saccharophagus degradans (strain 2-40 / ATCC 43961 / DSM 17024).